We begin with the raw amino-acid sequence, 278 residues long: MALKKYKPTSPAQRGLVLVDRSALYKGKPVKDLTEGLTKSGGRNNHGRITVRFRGGGHKRSYRTVDFKRRRYDVPATVERLEYDPNRTAFIALVKYEDGELAYILAPQRLQPGDVVISGSRVDVKPGNAMPLANIPVGTIVHNVEMKPGKGGQIARSAGTYVQLVGRDQGYALLRLSSGEQRMVPATCMASIGAVSNPDHSNITIAKAGRNRWLGKRPHVRGVVMNPVDHPHGGGEGRTSGGRHPVTPWGKPTKGKKTRANKATDKYIVRSRHQKKKG.

The disordered stretch occupies residues 225 to 278 (MNPVDHPHGGGEGRTSGGRHPVTPWGKPTKGKKTRANKATDKYIVRSRHQKKKG). Residues 269–278 (VRSRHQKKKG) are compositionally biased toward basic residues.

This sequence belongs to the universal ribosomal protein uL2 family. In terms of assembly, part of the 50S ribosomal subunit. Forms a bridge to the 30S subunit in the 70S ribosome.

Functionally, one of the primary rRNA binding proteins. Required for association of the 30S and 50S subunits to form the 70S ribosome, for tRNA binding and peptide bond formation. It has been suggested to have peptidyltransferase activity; this is somewhat controversial. Makes several contacts with the 16S rRNA in the 70S ribosome. The chain is Large ribosomal subunit protein uL2 from Parvibaculum lavamentivorans (strain DS-1 / DSM 13023 / NCIMB 13966).